Reading from the N-terminus, the 337-residue chain is Probable dual-specificity RNA methyltransferase RlmN (337 aa).

Catalysis depends on E88, which acts as the Proton acceptor. The 229-residue stretch at 94 to 322 (SSDRLTVCVS…ASIRRSRGLD (229 aa)) folds into the Radical SAM core domain. A disulfide bond links C101 and C327. [4Fe-4S] cluster is bound by residues C108, C112, and C115. Residues 155 to 156 (GE), S185, 208 to 210 (SLH), and N284 contribute to the S-adenosyl-L-methionine site. The S-methylcysteine intermediate role is filled by C327.

It belongs to the radical SAM superfamily. RlmN family. The cofactor is [4Fe-4S] cluster.

The protein resides in the cytoplasm. The enzyme catalyses adenosine(2503) in 23S rRNA + 2 reduced [2Fe-2S]-[ferredoxin] + 2 S-adenosyl-L-methionine = 2-methyladenosine(2503) in 23S rRNA + 5'-deoxyadenosine + L-methionine + 2 oxidized [2Fe-2S]-[ferredoxin] + S-adenosyl-L-homocysteine. It carries out the reaction adenosine(37) in tRNA + 2 reduced [2Fe-2S]-[ferredoxin] + 2 S-adenosyl-L-methionine = 2-methyladenosine(37) in tRNA + 5'-deoxyadenosine + L-methionine + 2 oxidized [2Fe-2S]-[ferredoxin] + S-adenosyl-L-homocysteine. In terms of biological role, specifically methylates position 2 of adenine 2503 in 23S rRNA and position 2 of adenine 37 in tRNAs. In Thermosynechococcus vestitus (strain NIES-2133 / IAM M-273 / BP-1), this protein is Probable dual-specificity RNA methyltransferase RlmN.